Here is a 159-residue protein sequence, read N- to C-terminus: Small ribosomal subunit protein uS7 (159 aa).

It belongs to the universal ribosomal protein uS7 family. As to quaternary structure, part of the 30S ribosomal subunit. Contacts proteins S9 and S11.

In terms of biological role, one of the primary rRNA binding proteins, it binds directly to 16S rRNA where it nucleates assembly of the head domain of the 30S subunit. Is located at the subunit interface close to the decoding center, probably blocks exit of the E-site tRNA. This is Small ribosomal subunit protein uS7 from Wolbachia pipientis wMel.